Consider the following 513-residue polypeptide: Ribonuclease Y (513 aa).

The chain crosses the membrane as a helical span at residues tyrosine 6–aspartate 26. Residues threonine 203–valine 288 enclose the KH domain. Positions valine 329–alanine 422 constitute an HD domain.

Belongs to the RNase Y family.

The protein localises to the cell membrane. Its function is as follows. Endoribonuclease that initiates mRNA decay. This chain is Ribonuclease Y, found in Clostridium botulinum (strain Loch Maree / Type A3).